Consider the following 470-residue polypeptide: Calcium/manganese antiporter SLC30A10 (470 aa).

Over 1–10 the chain is Cytoplasmic; it reads MGRYSGKTCR. A helical membrane pass occupies residues 11–31; the sequence is LLFMLVLTAAFFVAELVSGYL. Residues 32–34 lie on the Extracellular side of the membrane; it reads GNS. The helical transmembrane segment at 35–55 threads the bilayer; the sequence is IALLSDSFNMLSDLISLCVGL. The Cytoplasmic segment spans residues 56–81; it reads GSGYIARRGPRGSSATYGYVRAEVVG. A helical membrane pass occupies residues 82–102; that stretch reads ALSNAVFLTALCFTIFVEAVL. The Extracellular segment spans residues 103–113; sequence RLARPERIDDP. The chain crosses the membrane as a helical span at residues 114 to 134; the sequence is ELVLIVGALGLAVNVVGLLIF. Over 135–233 the chain is Cytoplasmic; it reads QDCGACFSRC…KSEALNIRGV (99 aa). The tract at residues 146–223 is disordered; sequence RGRRTRPSQQ…EPEETTKKEK (78 aa). The segment covering 171–184 has biased composition (low complexity); sequence AATATAPGSGTAVT. Residues 234–254 traverse the membrane as a helical segment; it reads LLHVMGDALGSVVVVITAIIF. The Extracellular segment spans residues 255–270; it reads YVQPLRREDPCNWQCY. Residues 271-291 form a helical membrane-spanning segment; it reads IDPSLTVVMVIIILSSAFPLI. Residues 292 to 470 lie on the Cytoplasmic side of the membrane; that stretch reads KETAVILLQM…RQHYENSTHF (179 aa). A required for plasma membrane localization region spans residues 300-470; it reads QMVPKGVNME…RQHYENSTHF (171 aa). The segment at 451 to 470 is disordered; that stretch reads QGQTLSKTQERQHYENSTHF. Positions 458 to 470 are enriched in basic and acidic residues; that stretch reads TQERQHYENSTHF.

Belongs to the cation diffusion facilitator (CDF) transporter (TC 2.A.4) family. SLC30A subfamily. In terms of assembly, forms homodimers. Forms heterodimers and high-molecular weight oligomers with SLC30A3, SLC30A2 and SLC30A4; heterodimerization is mediated by covalent-bound tyrosine residues, occurs probably in a tissue-specific manner and could mediate the intracellular zinc transport activity into early endosomes and recycling endosomes. In terms of tissue distribution, specifically expressed in fetal liver and fetal brain.

It is found in the cell membrane. The protein localises to the golgi apparatus membrane. The protein resides in the recycling endosome membrane. It localises to the early endosome membrane. It catalyses the reaction Mn(2+)(out) + Ca(2+)(in) = Mn(2+)(in) + Ca(2+)(out). The enzyme catalyses Zn(2+)(in) = Zn(2+)(out). Functionally, calcium:manganese antiporter of the plasma membrane mediating the efflux of intracellular manganese coupled to an active extracellular calcium exchange. Required for intracellular manganese homeostasis, an essential cation for the function of several enzymes, including some crucially important for the metabolism of neurotransmitters and other neuronal metabolic pathways. Manganese can also be cytotoxic and induce oxidative stress, mitochondrial dysfunction and apoptosis. Could also have an intracellular zinc ion transporter activity, directly regulating intracellular zinc ion homeostasis and more indirectly various signaling pathway and biological processes. The protein is Calcium/manganese antiporter SLC30A10 of Mus musculus (Mouse).